The chain runs to 346 residues: MHLPGCAPAMADGSFSLAGHLLRSPGGSTSRLHSIEAILGFTKDDGILGTFPAERGARGAKERDRRLGARPACPKAPEEGSEPSPPPAPAPAPEYEAPRPYCPKEPGEARPSPGLPVGPATGEAKLSEEEQPKKKHRRNRTTFTTYQLHELERAFEKSHYPDVYSREELAGKVNLPEVRVQVWFQNRRAKWRRQEKLEVSSMKLQDSPLLSFSRSPPSATLSPLGAGPGSGGGPAGGALPLESWLGPPLPGGGATALQSLPGFGPPAQSLPASYTPPPPPPPFLNSPPLGPGLQPLAPPPPSYPCGPGFGDKFPLDEADPRNSSIAALRLKAKEHIQAIGKPWQAL.

Positions 33-40 (HSIEAILG) match the Octapeptide motif motif. Disordered stretches follow at residues 46 to 145 (GILG…TFTT) and 194 to 318 (QEKL…LDEA). Over residues 55-67 (RGARGAKERDRRL) the composition is skewed to basic and acidic residues. Positions 83–92 (PSPPPAPAPA) are enriched in pro residues. Residues 136 to 195 (HRRNRTTFTTYQLHELERAFEKSHYPDVYSREELAGKVNLPEVRVQVWFQNRRAKWRRQE) constitute a DNA-binding region (homeobox). Positions 207–225 (SPLLSFSRSPPSATLSPLG) are enriched in low complexity. Gly residues predominate over residues 226–236 (AGPGSGGGPAG). The span at 237–246 (GALPLESWLG) shows a compositional bias: low complexity. Residues 274 to 304 (YTPPPPPPPFLNSPPLGPGLQPLAPPPPSYP) show a composition bias toward pro residues. Positions 323 to 336 (SSIAALRLKAKEHI) match the OAR motif. Positions 329–333 (RLKAK) match the Nuclear localization signal motif.

It belongs to the paired homeobox family. Bicoid subfamily. As to expression, expressed in the developing eye and weakly expressed in the adult retina.

The protein localises to the nucleus. Functionally, plays a critical role in eye formation by regulating the initial specification of retinal cells and/or their subsequent proliferation. Binds to the photoreceptor conserved element-I (PCE-1/Ret 1) in the photoreceptor cell-specific arrestin promoter. This Homo sapiens (Human) protein is Retinal homeobox protein Rx (RAX).